The chain runs to 282 residues: MSTYLIGDVHGCYDELIALLKQVDFTPGQDTLWLTGDLVARGPGSLDVLRFVKSLGDSVRLVLGNHDLHLLAVFAGISRNKPKDRITPLLEAHDVDELINWLRRQPLLQIDEEKKLVMAHAGITPQWDLQTAKECARDVEAVLASDSYPFFLDAMYGDMPNNWSPELSGVARLRFVTNAFTRMRYCFPNGQLDMYCKDTPENAPSPLKPWFAIPGPVTNEYSVVFGHWASLEGKGTPENIYALDTGCCWGGDMTCLRWEDKAYFIQPSNRQLDLGEGEAAAS.

This sequence belongs to the Ap4A hydrolase family.

It catalyses the reaction P(1),P(4)-bis(5'-adenosyl) tetraphosphate + H2O = 2 ADP + 2 H(+). In terms of biological role, hydrolyzes diadenosine 5',5'''-P1,P4-tetraphosphate to yield ADP. This Enterobacter sp. (strain 638) protein is Bis(5'-nucleosyl)-tetraphosphatase, symmetrical.